Consider the following 296-residue polypeptide: Probable xyloglucan endotransglucosylase/hydrolase 1 (296 aa).

Positions 1–22 (MGIIKGVLFSIVLINLSLVVFC) are cleaved as a signal peptide. A GH16 domain is found at 23-221 (GYPRRPVDVP…WANAPFTASY (199 aa)). Catalysis depends on glutamate 107, which acts as the Nucleophile. Glutamate 111 serves as the catalytic Proton donor. Glutamate 111 serves as a coordination point for xyloglucan. N-linked (GlcNAc...) asparagine glycosylation occurs at asparagine 115. Xyloglucan is bound by residues 124-126 (QTN), 134-136 (NRE), 200-201 (DW), and glycine 205. 2 disulfide bridges follow: cysteine 229-cysteine 240 and cysteine 277-cysteine 290. Arginine 282 is a xyloglucan binding site.

The protein belongs to the glycosyl hydrolase 16 family. XTH group 1 subfamily. Contains at least one intrachain disulfide bond essential for its enzymatic activity.

Its subcellular location is the secreted. It localises to the cell wall. The protein resides in the extracellular space. The protein localises to the apoplast. The catalysed reaction is breaks a beta-(1-&gt;4) bond in the backbone of a xyloglucan and transfers the xyloglucanyl segment on to O-4 of the non-reducing terminal glucose residue of an acceptor, which can be a xyloglucan or an oligosaccharide of xyloglucan.. Functionally, catalyzes xyloglucan endohydrolysis (XEH) and/or endotransglycosylation (XET). Cleaves and religates xyloglucan polymers, an essential constituent of the primary cell wall, and thereby participates in cell wall construction of growing tissues. This is Probable xyloglucan endotransglucosylase/hydrolase 1 (XTH1) from Solanum lycopersicum (Tomato).